The sequence spans 396 residues: Subtelomeric hrmA-associated cluster protein AFUB_079040 (396 aa).

Disordered regions lie at residues 1 to 32 (MANK…QQSL) and 347 to 396 (YPEN…ECGR). Positions 23-32 (SHASGSQQSL) are enriched in polar residues. Basic residues predominate over residues 367–380 (SKKKKDKKKKKSNK).

Its function is as follows. Part of the subtelomeric hrmA-associated cluster (HAC) containing genes that alter the hyphal surface (such as reduced total chitin or increased beta-glucan exposure) and perturb inter-hyphal interactions within the developing biofilms, resulting in a loss of vertically aligned polarized growing filaments. Consequently, this hypoxia-typic morphotype (called H-MORPH) with altered biofilm architecture leads to increased hypoxia fitness, increased host inflammation, rapid disease progression, and mortality in a murine model of invasive aspergillosis. The protein is Subtelomeric hrmA-associated cluster protein AFUB_079040 of Aspergillus fumigatus (strain CBS 144.89 / FGSC A1163 / CEA10) (Neosartorya fumigata).